A 690-amino-acid chain; its full sequence is MARWWGGEGRGGSGTPVVVKMESPEWAISEVEAGAAAPGSPAAGGKAGRGKNARQITWVLLLKAHRAAGKLTGAASAALSVAAAARRRVAAGRTDSDDAAAAPPGESPALRARFHGFLRAFLLLSVLLLAVDVAAHAQGWHAVVPDLLAVEGLFAAAYASWLRVRLEYLAPGLQFLANACVVLFLIQSADRLILCLGCLWIKLKGIKPVPKASGGGGGGKGSDDVEAGADEFPMVLVQIPMCNEKEVYQQSIGAVCNLDWPRSNFLVQVLDDSDDAATSALIKEEVEKWQREGVRILYRHRVIRDGYKAGNLKSAMNCSYVKDYEFVVIFDADFQPQADFLKRTVPHFKGNEDVGLVQARWSFVNKDENLLTRLQNINLCFHFEVEQQVNGVFLNFFGFNGTAGVWRIKALEDSGGWMERTTVEDMDIAVRAHLKGWKFLYINDVECQCELPESYEAYRKQQHRWHSGPMQLFRLCFVDIIKSKIGVWKKFNLIFLFFLLRKLILPFYSFTLFCIILPMTMFVPEAELPAWVVCYIPATMSLLNILPAPKSFPFIVPYLLFENTMSVTKFNAMISGLFQLGSAYEWVVTKKSGRSSEGDLVSLVEKQPKQQRVGSAPNLDSLAKESHPKKDSKKKKHNRIYQKELALSFLLLTAAARSLLSVQGIHFYFLLFQGVSFLVVGLDLIGEQVE.

The next 2 helical transmembrane spans lie at 120–140 and 166–186; these read AFLL…AQGW and LEYL…LFLI. Asp-272 is a catalytic residue. Residues Asp-331 and Asp-333 each coordinate substrate. Residue Asp-425 is part of the active site. The next 2 membrane-spanning stretches (helical) occupy residues 503–523 and 528–548; these read LILP…TMFV and LPAW…ILPA. A disordered region spans residues 607 to 637; sequence QPKQQRVGSAPNLDSLAKESHPKKDSKKKKH. A run of 2 helical transmembrane segments spans residues 640–659 and 665–685; these read IYQK…ARSL and IHFY…LDLI.

This sequence belongs to the glycosyltransferase 2 family. Plant cellulose synthase-like C subfamily.

It localises to the golgi apparatus membrane. In terms of biological role, probable beta-1,4-glucan synthase rather involved in the synthesis of the xyloglucan backbone than cellulose. Seems to work simultaneously with xyloglucan 6-xylosyltransferase. Xyloglucan is a noncellulosic polysaccharides of plant cell wall and consists of a glucan backbone substituted by xylose, galactose and fucose. This is Probable xyloglucan glycosyltransferase 1 (CSLC1) from Oryza sativa subsp. japonica (Rice).